The primary structure comprises 115 residues: Large ribosomal subunit protein bL20 (115 aa).

This sequence belongs to the bacterial ribosomal protein bL20 family.

In terms of biological role, binds directly to 23S ribosomal RNA and is necessary for the in vitro assembly process of the 50S ribosomal subunit. It is not involved in the protein synthesizing functions of that subunit. This chain is Large ribosomal subunit protein bL20, found in Borrelia duttonii (strain Ly).